Reading from the N-terminus, the 139-residue chain is Large ribosomal subunit protein uL22c (139 aa).

This sequence belongs to the universal ribosomal protein uL22 family. As to quaternary structure, part of the 50S ribosomal subunit.

It is found in the plastid. The protein localises to the chloroplast. This protein binds specifically to 23S rRNA. In terms of biological role, the globular domain of the protein is located near the polypeptide exit tunnel on the outside of the subunit, while an extended beta-hairpin is found that lines the wall of the exit tunnel in the center of the 70S ribosome. This Cycas taitungensis (Prince sago) protein is Large ribosomal subunit protein uL22c (rpl22).